Here is a 210-residue protein sequence, read N- to C-terminus: Thymidylate kinase (210 aa).

Position 11–18 (11–18 (GLEGAGKS)) interacts with ATP.

Belongs to the thymidylate kinase family.

The enzyme catalyses dTMP + ATP = dTDP + ADP. Phosphorylation of dTMP to form dTDP in both de novo and salvage pathways of dTTP synthesis. This is Thymidylate kinase from Vibrio campbellii (strain ATCC BAA-1116).